We begin with the raw amino-acid sequence, 129 residues long: Glycine cleavage system H protein (129 aa).

One can recognise a Lipoyl-binding domain in the interval 24–106; the sequence is SYTVGITEHA…YGEGWFFRVM (83 aa). Lys65 carries the N6-lipoyllysine modification.

The protein belongs to the GcvH family. The glycine cleavage system is composed of four proteins: P, T, L and H. The cofactor is (R)-lipoate.

The glycine cleavage system catalyzes the degradation of glycine. The H protein shuttles the methylamine group of glycine from the P protein to the T protein. The polypeptide is Glycine cleavage system H protein (Shewanella baltica (strain OS155 / ATCC BAA-1091)).